The primary structure comprises 1342 residues: DNA-directed RNA polymerase subunit beta (1342 aa).

It belongs to the RNA polymerase beta chain family. In terms of assembly, the RNAP catalytic core consists of 2 alpha, 1 beta, 1 beta' and 1 omega subunit. When a sigma factor is associated with the core the holoenzyme is formed, which can initiate transcription.

The enzyme catalyses RNA(n) + a ribonucleoside 5'-triphosphate = RNA(n+1) + diphosphate. In terms of biological role, DNA-dependent RNA polymerase catalyzes the transcription of DNA into RNA using the four ribonucleoside triphosphates as substrates. The protein is DNA-directed RNA polymerase subunit beta of Salmonella typhimurium (strain LT2 / SGSC1412 / ATCC 700720).